The chain runs to 472 residues: GTPase Der (472 aa).

EngA-type G domains lie at 3–166 (PIIA…IQNN) and 188–361 (IKLA…HCST). GTP contacts are provided by residues 9 to 16 (GRPNVGKS), 56 to 60 (DTGGI), 118 to 121 (NKID), 194 to 201 (GSSNVGKS), 241 to 245 (DTAGL), and 306 to 309 (NKWD). In terms of domain architecture, KH-like spans 362–446 (KRISTALLTK…PIRIQFNEPA (85 aa)).

The protein belongs to the TRAFAC class TrmE-Era-EngA-EngB-Septin-like GTPase superfamily. EngA (Der) GTPase family. In terms of assembly, associates with the 50S ribosomal subunit.

GTPase that plays an essential role in the late steps of ribosome biogenesis. In Baumannia cicadellinicola subsp. Homalodisca coagulata, this protein is GTPase Der.